The sequence spans 391 residues: NADH-quinone oxidoreductase subunit D (391 aa).

It belongs to the complex I 49 kDa subunit family. In terms of assembly, NDH-1 is composed of 14 different subunits. Subunits NuoB, C, D, E, F, and G constitute the peripheral sector of the complex.

It localises to the cell inner membrane. The enzyme catalyses a quinone + NADH + 5 H(+)(in) = a quinol + NAD(+) + 4 H(+)(out). Its function is as follows. NDH-1 shuttles electrons from NADH, via FMN and iron-sulfur (Fe-S) centers, to quinones in the respiratory chain. The immediate electron acceptor for the enzyme in this species is believed to be ubiquinone. Couples the redox reaction to proton translocation (for every two electrons transferred, four hydrogen ions are translocated across the cytoplasmic membrane), and thus conserves the redox energy in a proton gradient. This Rickettsia rickettsii (strain Sheila Smith) protein is NADH-quinone oxidoreductase subunit D.